A 102-amino-acid polypeptide reads, in one-letter code: Late embryogenesis abundant protein D-19 (102 aa).

Residues 1–102 (MASEQYQAMR…IDESKFRTKN (102 aa)) form a disordered region. Positions 48-58 (EGRHKGGETRK) are enriched in basic and acidic residues.

This sequence belongs to the small hydrophilic plant seed protein family.

Its function is as follows. LEA proteins are late embryonic proteins abundant in higher plant seed embryos. There are two subsets of LEA proteins (5a and 5b), the first ones are expressed when the cotyledon weight reach 80 mg and the second set are expressed above 100 mg. The function of those proteins is not known. In Gossypium hirsutum (Upland cotton), this protein is Late embryogenesis abundant protein D-19.